Consider the following 450-residue polypeptide: MLKYFGTDGVRGEANKVLTPEMAFKLGRMGGYVLTKEKEDGGQARVLVSRDTRISGEMLEHALISGLLSVGIEVLECGVMTTPGLSYLVQAQGADAGVQISASHNPVEDNGIKFFGSNGLKLSDAKEEEIEELIDTKQDMLPRPSAEGLGTVTDFRDGSNKYIQFLENTIPEDLSGIKVVIDGANGAASAFISRLFADLDVDFTTISTHPNGLNINDHCGATHTARLQEEVVKQGAQLGLAFDGDADRCIAVDENGNEVDGDHIMYVIGSYLADHGRLKKDTIVTTVMSNLGFTKALERRGIKNVRTQVGDRYVSEEMRANGYSLGGEQSGHVIISDYHNTGDGMLTGLHLMLVMKKTGKSLTELLADFKEYPQVLVNVPVKDKNSWKNHQAVVDAIDSVEKDMAGNGRVLVRPSGTQELLRVMAEGPTQEITQEYVDRIVKVVTTEMGE.

Ser-103 serves as the catalytic Phosphoserine intermediate. Residues Ser-103, Asp-243, Asp-245, and Asp-247 each contribute to the Mg(2+) site. Phosphoserine is present on Ser-103.

The protein belongs to the phosphohexose mutase family. It depends on Mg(2+) as a cofactor. Post-translationally, activated by phosphorylation.

The enzyme catalyses alpha-D-glucosamine 1-phosphate = D-glucosamine 6-phosphate. In terms of biological role, catalyzes the conversion of glucosamine-6-phosphate to glucosamine-1-phosphate. In Lactobacillus delbrueckii subsp. bulgaricus (strain ATCC BAA-365 / Lb-18), this protein is Phosphoglucosamine mutase.